Consider the following 517-residue polypeptide: Fluconazole resistance protein 1 (517 aa).

The segment at residues Cys26–Cys52 is a DNA-binding region (zn(2)-C6 fungal-type). 4 disordered regions span residues Lys106–Thr137, Ser250–Gln270, Ser284–Ser307, and Gly378–Phe403. A compositionally biased stretch (low complexity) spans Ser113–Ser124. The segment covering Ser250–Pro260 has biased composition (polar residues). Residues Gln261–Gln270 show a composition bias toward low complexity. Positions Asn298 to Ser307 are enriched in polar residues. Positions Gly388–Ser398 are enriched in basic residues.

The protein localises to the nucleus. Functionally, transcription factor that acts as a negative regulator of fluconazole resistance in C.albicans. Also confers fluconazole resistance in S.cerevisiae by activation of the PDR5 gene. In Candida albicans (Yeast), this protein is Fluconazole resistance protein 1 (FCR1).